Here is a 157-residue protein sequence, read N- to C-terminus: Glutathione peroxidase (157 aa).

Cys-35 is an active-site residue.

Belongs to the glutathione peroxidase family.

It catalyses the reaction 2 glutathione + H2O2 = glutathione disulfide + 2 H2O. In Lactococcus lactis subsp. cremoris (strain MG1363), this protein is Glutathione peroxidase (gpo).